Reading from the N-terminus, the 184-residue chain is MLASASPARRRLLQQAAIPHQVMVSGVDEETIHHFDPVRLVQHLAEAKAGVVHQQIKAALPVLGCDSVLEFDGTVFGKPATAVEASSRWQRMAGAWGFLHTGHCLLSVNGERLSETVTTRVLFAALSDSEIEAYVATGEPLLCAGGFALEGQGGLMVERLEGCFSNVIGLSLPLLRRWLLVINE.

Asp66 serves as the catalytic Proton acceptor.

Belongs to the Maf family. The cofactor is a divalent metal cation.

The protein localises to the cytoplasm. The enzyme catalyses a ribonucleoside 5'-triphosphate + H2O = a ribonucleoside 5'-phosphate + diphosphate + H(+). It carries out the reaction a 2'-deoxyribonucleoside 5'-triphosphate + H2O = a 2'-deoxyribonucleoside 5'-phosphate + diphosphate + H(+). Functionally, nucleoside triphosphate pyrophosphatase. May have a dual role in cell division arrest and in preventing the incorporation of modified nucleotides into cellular nucleic acids. In Prochlorococcus marinus (strain MIT 9313), this protein is Nucleoside triphosphate pyrophosphatase.